Consider the following 382-residue polypeptide: Putative UDP-sugar transporter DDB_G0278631 (382 aa).

The next 7 membrane-spanning stretches (helical) occupy residues 117 to 137 (FSASNFLLFNQMVVTIVILHI), 183 to 203 (MYSALKRLVAVVILVMEYFIL), 211 to 231 (IIASVVVMVIGAVVAGITDLS), 234 to 254 (SLGYSLVLLSCIFQASYLIYV), 264 to 284 (YDMLYYNSVLSLPITIFLMIV), 302 to 322 (FQAYFILSIFLGFFLNFCIFF), and 354 to 374 (IIIHPINILGLIINIIGSIWY).

Belongs to the TPT transporter family. SLC35D subfamily.

It is found in the membrane. Functionally, may be nvolved in the import of UDP-sugars. The chain is Putative UDP-sugar transporter DDB_G0278631 from Dictyostelium discoideum (Social amoeba).